We begin with the raw amino-acid sequence, 359 residues long: Glycerol-1-phosphate dehydrogenase [NAD(P)+] (359 aa).

NAD(+)-binding positions include glycine 107 to aspartate 111 and threonine 129 to serine 132. Aspartate 134 is a binding site for substrate. NAD(+) is bound at residue serine 138. Aspartate 181 serves as a coordination point for substrate. Residues aspartate 181 and histidine 261 each coordinate Zn(2+). Residue histidine 265 participates in substrate binding. Histidine 277 contacts Zn(2+).

Belongs to the glycerol-1-phosphate dehydrogenase family. It depends on Zn(2+) as a cofactor.

Its subcellular location is the cytoplasm. It carries out the reaction sn-glycerol 1-phosphate + NAD(+) = dihydroxyacetone phosphate + NADH + H(+). The catalysed reaction is sn-glycerol 1-phosphate + NADP(+) = dihydroxyacetone phosphate + NADPH + H(+). It participates in membrane lipid metabolism; glycerophospholipid metabolism. Its function is as follows. Catalyzes the NAD(P)H-dependent reduction of dihydroxyacetonephosphate (DHAP or glycerone phosphate) to glycerol 1-phosphate (G1P). The G1P thus generated is used as the glycerophosphate backbone of phospholipids in the cellular membranes of Archaea. The chain is Glycerol-1-phosphate dehydrogenase [NAD(P)+] from Methanoregula boonei (strain DSM 21154 / JCM 14090 / 6A8).